The primary structure comprises 87 residues: Beta-toxin Cn4 (87 aa).

The N-terminal stretch at 1–19 (MNSLLMITACLALVGTVWA) is a signal peptide. The region spanning 20 to 85 (KEGYLVNSYT…VWPLKNKTCN (66 aa)) is the LCN-type CS-alpha/beta domain. 4 cysteine pairs are disulfide-bonded: cysteine 31-cysteine 84, cysteine 35-cysteine 60, cysteine 44-cysteine 65, and cysteine 48-cysteine 67. Asparagine 85 is modified (asparagine amide).

It belongs to the long (4 C-C) scorpion toxin superfamily. Sodium channel inhibitor family. Beta subfamily. In terms of tissue distribution, expressed by the venom gland.

The protein localises to the secreted. Its function is as follows. Beta toxins bind voltage-independently at site-4 of sodium channels (Nav) and shift the voltage of activation toward more negative potentials thereby affecting sodium channel activation and promoting spontaneous and repetitive firing. This toxin affects the activation mechanism of sodium channels of squid axon. It also competes with Cn2 in rat brain synaptosomes. Is lethal to mice. This is Beta-toxin Cn4 from Centruroides noxius (Mexican scorpion).